The primary structure comprises 307 residues: uncharacterized protein (307 aa).

A helical transmembrane segment spans residues 12–34 (LLAFLLALIMIGSVFAYMLSGGS).

It localises to the membrane. This is an uncharacterized protein from Archaeoglobus fulgidus (strain ATCC 49558 / DSM 4304 / JCM 9628 / NBRC 100126 / VC-16).